Here is a 260-residue protein sequence, read N- to C-terminus: 3'-5' ssDNA/RNA exonuclease TatD (260 aa).

Glu-91, His-127, and His-152 together coordinate a divalent metal cation.

This sequence belongs to the metallo-dependent hydrolases superfamily. TatD-type hydrolase family. TatD subfamily. Monomer. The cofactor is Mg(2+).

It localises to the cytoplasm. 3'-5' exonuclease that prefers single-stranded DNA and RNA. May play a role in the H(2)O(2)-induced DNA damage repair. The protein is 3'-5' ssDNA/RNA exonuclease TatD of Enterobacter sp. (strain 638).